Here is a 406-residue protein sequence, read N- to C-terminus: Peptide chain release factor PrfB3, chloroplastic (406 aa).

Belongs to the prokaryotic/mitochondrial release factor family. As to quaternary structure, interacts with PDE338.

It localises to the plastid. It is found in the chloroplast stroma. The protein resides in the chloroplast. In terms of biological role, involved in the light- and stress-dependent regulation of stability of 3' processed petB transcripts, thus regulating cytochrome b6 accumulation, a rate-limiting step in photosynthetic electron transport. May be recruited to specifically protect petB transcripts against 3'-5' exonucleolytic attack by masking the 3' ends. Does not function as release factor. The polypeptide is Peptide chain release factor PrfB3, chloroplastic (Arabidopsis thaliana (Mouse-ear cress)).